The sequence spans 316 residues: Ribosomal protein L11 methyltransferase (316 aa).

S-adenosyl-L-methionine is bound by residues threonine 157, glycine 178, aspartate 200, and asparagine 243.

It belongs to the methyltransferase superfamily. PrmA family.

The protein localises to the cytoplasm. It catalyses the reaction L-lysyl-[protein] + 3 S-adenosyl-L-methionine = N(6),N(6),N(6)-trimethyl-L-lysyl-[protein] + 3 S-adenosyl-L-homocysteine + 3 H(+). Functionally, methylates ribosomal protein L11. The protein is Ribosomal protein L11 methyltransferase of Streptococcus pneumoniae (strain P1031).